Consider the following 205-residue polypeptide: ATP-dependent Clp protease proteolytic subunit (205 aa).

The active-site Nucleophile is serine 101. Histidine 126 is a catalytic residue.

The protein belongs to the peptidase S14 family. As to quaternary structure, component of the chloroplastic Clp protease core complex.

Its subcellular location is the plastid. It localises to the chloroplast stroma. It carries out the reaction Hydrolysis of proteins to small peptides in the presence of ATP and magnesium. alpha-casein is the usual test substrate. In the absence of ATP, only oligopeptides shorter than five residues are hydrolyzed (such as succinyl-Leu-Tyr-|-NHMec, and Leu-Tyr-Leu-|-Tyr-Trp, in which cleavage of the -Tyr-|-Leu- and -Tyr-|-Trp bonds also occurs).. Its function is as follows. Cleaves peptides in various proteins in a process that requires ATP hydrolysis. Has a chymotrypsin-like activity. Plays a major role in the degradation of misfolded proteins. The protein is ATP-dependent Clp protease proteolytic subunit of Pinus contorta (Shore pine).